Reading from the N-terminus, the 632-residue chain is Biosynthetic arginine decarboxylase (632 aa).

K101 carries the N6-(pyridoxal phosphate)lysine modification. 281 to 291 (FDVGGGLGVDY) contributes to the substrate binding site.

The protein belongs to the Orn/Lys/Arg decarboxylase class-II family. SpeA subfamily. The cofactor is Mg(2+). Requires pyridoxal 5'-phosphate as cofactor.

The enzyme catalyses L-arginine + H(+) = agmatine + CO2. It participates in amine and polyamine biosynthesis; agmatine biosynthesis; agmatine from L-arginine: step 1/1. Functionally, catalyzes the biosynthesis of agmatine from arginine. The chain is Biosynthetic arginine decarboxylase from Salmonella agona (strain SL483).